We begin with the raw amino-acid sequence, 206 residues long: Small ribosomal subunit protein uS4A (206 aa).

The 67-residue stretch at 98-164 (MRLDNVVYKL…EKFKTFAENP (67 aa)) folds into the S4 RNA-binding domain.

The protein belongs to the universal ribosomal protein uS4 family. As to quaternary structure, part of the 30S ribosomal subunit. Contacts protein S5. The interaction surface between S4 and S5 is involved in control of translational fidelity.

Functionally, one of the primary rRNA binding proteins, it binds directly to 16S rRNA where it nucleates assembly of the body of the 30S subunit. Its function is as follows. With S5 and S12 plays an important role in translational accuracy. In Clostridium novyi (strain NT), this protein is Small ribosomal subunit protein uS4A.